Reading from the N-terminus, the 172-residue chain is Large ribosomal subunit protein uL10 (172 aa).

Belongs to the universal ribosomal protein uL10 family. As to quaternary structure, part of the ribosomal stalk of the 50S ribosomal subunit. The N-terminus interacts with L11 and the large rRNA to form the base of the stalk. The C-terminus forms an elongated spine to which L12 dimers bind in a sequential fashion forming a multimeric L10(L12)X complex.

In terms of biological role, forms part of the ribosomal stalk, playing a central role in the interaction of the ribosome with GTP-bound translation factors. In Pelodictyon phaeoclathratiforme (strain DSM 5477 / BU-1), this protein is Large ribosomal subunit protein uL10.